The following is a 444-amino-acid chain: Zeaxanthin 4-ketolase (444 aa).

Positions valine 408 to alanine 444 are disordered. Residues serine 412 to glutamate 427 show a composition bias toward gly residues.

It catalyses the reaction all-trans-adonixanthin + 2 AH2 + 2 O2 = all-trans-(3S,3'S)-astaxanthin + 2 A + 3 H2O. The catalysed reaction is all-trans-zeaxanthin + 2 AH2 + 2 O2 = all-trans-adonixanthin + 2 A + 3 H2O. It carries out the reaction echinenone + 2 AH2 + 2 O2 = canthaxanthin + 2 A + 3 H2O. The enzyme catalyses all-trans-beta-carotene + 2 AH2 + 2 O2 = echinenone + 2 A + 3 H2O. Its pathway is carotenoid biosynthesis; astaxanthin biosynthesis. Involved in the biosynthesis of ketocarotenoids which are powerful anti-oxidative molecules. Catalyzes the conversion of zeaxanthin to astaxanthin via adonixanthin. Catalyzes the conversion of beta-carotene to canthaxanthin via echinenone. The chain is Zeaxanthin 4-ketolase from Chlamydomonas reinhardtii (Chlamydomonas smithii).